The primary structure comprises 237 residues: NADH-ubiquinone oxidoreductase assembly factor N7BML (237 aa).

The segment covering valine 214–lysine 223 has biased composition (basic and acidic residues). Residues valine 214–glycine 237 form a disordered region.

This sequence belongs to the complex I NDUFA12 subunit family.

Its subcellular location is the mitochondrion. Acts as an assembly factor of mitochondrial complex I. The sequence is that of NADH-ubiquinone oxidoreductase assembly factor N7BML from Yarrowia lipolytica (strain CLIB 122 / E 150) (Yeast).